A 317-amino-acid polypeptide reads, in one-letter code: Beta-ketoacyl-[acyl-carrier-protein] synthase III (317 aa).

Catalysis depends on residues Cys112 and His244. Positions 245–249 are ACP-binding; sequence QANLR. Asn274 is a catalytic residue.

Belongs to the thiolase-like superfamily. FabH family. As to quaternary structure, homodimer.

It localises to the cytoplasm. The enzyme catalyses malonyl-[ACP] + acetyl-CoA + H(+) = 3-oxobutanoyl-[ACP] + CO2 + CoA. It functions in the pathway lipid metabolism; fatty acid biosynthesis. In terms of biological role, catalyzes the condensation reaction of fatty acid synthesis by the addition to an acyl acceptor of two carbons from malonyl-ACP. Catalyzes the first condensation reaction which initiates fatty acid synthesis and may therefore play a role in governing the total rate of fatty acid production. Possesses both acetoacetyl-ACP synthase and acetyl transacylase activities. Its substrate specificity determines the biosynthesis of branched-chain and/or straight-chain of fatty acids. The sequence is that of Beta-ketoacyl-[acyl-carrier-protein] synthase III from Serratia proteamaculans (strain 568).